We begin with the raw amino-acid sequence, 282 residues long: Endo-1,4-beta-xylanase B (282 aa).

The signal sequence occupies residues 1-39 (MGISSILLSALIAGGALALPAAEPVSFDIRDENITLARR). N-linked (GlcNAc...) asparagine glycosylation is present at asparagine 33. The GH11 domain maps to 40 to 219 (AEAINYNQDY…GSGSGQISLS (180 aa)). Glutamate 117 serves as the catalytic Nucleophile. The active-site Proton donor is the glutamate 206. Positions 214–245 (GQISLSKGTGGGSTTTTPTGPTSTSTAPSSGG) are disordered. Residues 227-243 (TTTTPTGPTSTSTAPSS) are compositionally biased toward low complexity. In terms of domain architecture, CBM1 spans 246 to 282 (TGAAQWGQCGGIGWTGPTTCVAPYTCKYENAYYSQCQ).

Belongs to the glycosyl hydrolase 11 (cellulase G) family.

It localises to the secreted. It catalyses the reaction Endohydrolysis of (1-&gt;4)-beta-D-xylosidic linkages in xylans.. It functions in the pathway glycan degradation; xylan degradation. With respect to regulation, significantly inhibited by the wheat xylanase inhibiting protein I (XIP-I) and the proteinaceous endoxylanase Triticum aestivum xylanase inhibitors I (TAXI-I), but not TAXI-II. In terms of biological role, endo-1,4-beta-xylanase involved in the hydrolysis of xylan, a major structural heterogeneous polysaccharide found in plant biomass representing the second most abundant polysaccharide in the biosphere, after cellulose. This chain is Endo-1,4-beta-xylanase B (xynB), found in Talaromyces funiculosus (Fruitlet core rot fungus).